Here is a 404-residue protein sequence, read N- to C-terminus: Sulfate adenylyltransferase (404 aa).

This sequence belongs to the sulfate adenylyltransferase family.

The enzyme catalyses sulfate + ATP + H(+) = adenosine 5'-phosphosulfate + diphosphate. The protein operates within sulfur metabolism; hydrogen sulfide biosynthesis; sulfite from sulfate: step 1/3. This Chlorobaculum tepidum (strain ATCC 49652 / DSM 12025 / NBRC 103806 / TLS) (Chlorobium tepidum) protein is Sulfate adenylyltransferase.